The chain runs to 642 residues: Sodium- and chloride-dependent neutral and basic amino acid transporter B(0+) (642 aa).

Over 1-44 the chain is Cytoplasmic; the sequence is MDKLKCPSFFKCREKEKVSASSENFHVGENDENQDRGNWSKKSD. 3 helical membrane-spanning segments follow: residues 45-65, 72-92, and 110-130; these read YLLS…FPYL, GAFL…LFFL, and ILPL…FVTI. The Extracellular segment spans residues 131–234; that stretch reads YYNVIIAYSL…RSSGMNETGV (104 aa). Asparagine 155, asparagine 163, asparagine 174, asparagine 189, asparagine 197, asparagine 202, and asparagine 230 each carry an N-linked (GlcNAc...) asparagine glycan. 2 helical membrane passes run 235 to 255 and 261 to 281; these read IVWY…AALF and SGKV…ILLV. Asparagine 302 carries N-linked (GlcNAc...) asparagine glycosylation. Helical transmembrane passes span 315 to 335, 348 to 368, 399 to 419, 450 to 477, 480 to 500, 528 to 548, and 563 to 583; these read AATQ…ALSS, IVVC…IFSI, LAQL…LLTL, ITLG…VHLI, FCAG…IIWI, CWFV…LVQF, and VALG…MAII. Residues 584–642 lie on the Cytoplasmic side of the membrane; it reads KIIQAKGNIFQRLISCCRPASNWGPYLEQHRGERYKDMVDPKKEADHEIPTVSGSRKPE. Basic and acidic residues predominate over residues 622–632; that stretch reads VDPKKEADHEI. The interval 622 to 642 is disordered; sequence VDPKKEADHEIPTVSGSRKPE.

Belongs to the sodium:neurotransmitter symporter (SNF) (TC 2.A.22) family. SLC6A14 subfamily. In terms of tissue distribution, levels are highest in adult and fetal lung, in trachea and salivary gland. Lower levels detected in mammary gland, stomach and pituitary gland, and very low levels in colon, uterus, prostate and testis.

It is found in the membrane. The protein resides in the apical cell membrane. It carries out the reaction glycine(out) + chloride(out) + 2 Na(+)(out) = glycine(in) + chloride(in) + 2 Na(+)(in). The catalysed reaction is L-leucine(out) + chloride(out) + 2 Na(+)(out) = L-leucine(in) + chloride(in) + 2 Na(+)(in). The enzyme catalyses L-glutamine(out) + chloride(out) + 2 Na(+)(out) = L-glutamine(in) + chloride(in) + 2 Na(+)(in). It catalyses the reaction L-arginine(out) + chloride(out) + 2 Na(+)(out) = L-arginine(in) + chloride(in) + 2 Na(+)(in). It carries out the reaction (R)-carnitine(out) + chloride(out) + 2 Na(+)(out) = (R)-carnitine(in) + chloride(in) + 2 Na(+)(in). The catalysed reaction is O-butanoyl-(R)-carnitine(out) + chloride(out) + 2 Na(+)(out) = O-butanoyl-(R)-carnitine(in) + chloride(in) + 2 Na(+)(in). The enzyme catalyses O-propanoyl-(R)-carnitine(out) + chloride(out) + 2 Na(+)(out) = O-propanoyl-(R)-carnitine(in) + chloride(in) + 2 Na(+)(in). It catalyses the reaction L-isoleucine(out) + chloride(out) + 2 Na(+)(out) = L-isoleucine(in) + chloride(in) + 2 Na(+)(in). It carries out the reaction L-methionine(out) + chloride(out) + 2 Na(+)(out) = L-methionine(in) + chloride(in) + 2 Na(+)(in). The catalysed reaction is L-valine(out) + chloride(out) + 2 Na(+)(out) = L-valine(in) + chloride(in) + 2 Na(+)(in). The enzyme catalyses L-alanine(out) + chloride(out) + 2 Na(+)(out) = L-alanine(in) + chloride(in) + 2 Na(+)(in). It catalyses the reaction L-serine(out) + chloride(out) + 2 Na(+)(out) = L-serine(in) + chloride(in) + 2 Na(+)(in). It carries out the reaction L-cysteine(out) + chloride(out) + 2 Na(+)(out) = L-cysteine(in) + chloride(in) + 2 Na(+)(in). The catalysed reaction is L-asparagine(out) + chloride(out) + 2 Na(+)(out) = L-asparagine(in) + chloride(in) + 2 Na(+)(in). The enzyme catalyses L-threonine(out) + chloride(out) + 2 Na(+)(out) = L-threonine(in) + chloride(in) + 2 Na(+)(in). It catalyses the reaction L-phenylalanine(out) + chloride(out) + 2 Na(+)(out) = L-phenylalanine(in) + chloride(in) + 2 Na(+)(in). It carries out the reaction L-tryptophan(out) + chloride(out) + 2 Na(+)(out) = L-tryptophan(in) + chloride(in) + 2 Na(+)(in). The catalysed reaction is L-tyrosine(out) + chloride(out) + 2 Na(+)(out) = L-tyrosine(in) + chloride(in) + 2 Na(+)(in). The enzyme catalyses L-histidine(out) + chloride(out) + 2 Na(+)(out) = L-histidine(in) + chloride(in) + 2 Na(+)(in). It catalyses the reaction L-lysine(out) + chloride(out) + 2 Na(+)(out) = L-lysine(in) + chloride(in) + 2 Na(+)(in). It carries out the reaction beta-alanine(out) + chloride(out) + 2 Na(+)(out) = beta-alanine(in) + chloride(in) + 2 Na(+)(in). Its function is as follows. Amino acid transporter that plays an important role in the absorption of amino acids in the intestinal tract. Mediates the uptake of a broad range of neutral and cationic amino acids (with the exception of proline) in a Na(+)/Cl(-)-dependent manner. Transports non-alpha-amino acids such as beta-alanine with low affinity, and has a higher affinity for dipolar and cationic amino acids such as leucine and lysine. Can also transport carnitine, butirylcarnitine and propionylcarnitine coupled to the transmembrane gradients of Na(+) and Cl(-). This chain is Sodium- and chloride-dependent neutral and basic amino acid transporter B(0+), found in Homo sapiens (Human).